Here is a 174-residue protein sequence, read N- to C-terminus: Dehydratase AgnL8 (174 aa).

Tyrosine 24, tyrosine 44, and phenylalanine 47 together coordinate substrate. Active-site residues include histidine 79 and histidine 104.

This sequence belongs to the scytalone dehydratase family. Homotrimer. Each subunit contains an active site, located in the central part of the hydrophobic core of the monomer, which functions independently.

The protein operates within secondary metabolite biosynthesis. In terms of biological role, dehydratase; part of the gene cluster that mediates the biosynthesis of agnestins, dihydroxy-xanthone metabolites. The pathway begins with the assembly and cyclization of atrochrysone thioester by the non-reducing polyketide synthase Agnpks1. The atrochrysone carboxyl ACP thioesterase AgnL7 then breaks the thioester bond and releases the atrochrysone carboxylic acid as the first enzyme-free intermediate. The decarboxylase AgnL1 then catalyzes the concerted decarboxylation-elimination required to convert atochrysone carboxylic acid into emodin anthrone, which is further oxidized to emodin by the anthrone oxygenase AgnL2. Emodin then undergoes reduction catalyzed by the oxidoreductase AgnL4 to yield the dihydroquinone tautomer which is the substrate for reduction by the short chain dehydrogenase AgnL6 reduction to produce hydroxyketone, followed by AgnL8 dehydration and likely spontaneous autoxidation to chrysophanol. Baeyer-Villiger oxidation by the oxidase AgnL3 leads to monodictyphenone via cleavage of the C-10/C-10a bond of chrysophanol. Alternative cleavage at the C-4a/C-10 bond of chrysophanol also leads to the formation some cephalone F. Further conversion to agnestins A and B, requires reduction to dihydro-monodictyphenone, oxidation to agnestin C probably via an epoxide, and rearrangement to either agnestin A or agnestin B directly, although agnestin A or agnestin B can also interconvert. Within the cluster, AgnR1 is the only unassigned oxidoreductase present which could be involved in this conversion. However, AgnR1 seems not to be involved in this step, and thus genes involved in the proposed oxidation/reduction may be located elsewhere on the genome. Further agnestin A derivatives are probably formed by spontaneous decarboxylations, dehydrations and methanolysis reactions. The chain is Dehydratase AgnL8 from Paecilomyces divaricatus (Penicillium divaricatum).